A 417-amino-acid polypeptide reads, in one-letter code: Type IV inositol polyphosphate 5-phosphatase 9 (417 aa).

2 catalytic regions span residues 258-273 (DRVI…ISLP) and 339-354 (KKRA…WYGN).

Belongs to the inositol polyphosphate 5-phosphatase family. Specifically expressed in roots.

It carries out the reaction a 1,2-diacyl-sn-glycero-3-phospho-(1D-myo-inositol-4,5-bisphosphate) + H2O = a 1,2-diacyl-sn-glycero-3-phospho-(1D-myo-inositol 4-phosphate) + phosphate. It catalyses the reaction a 1,2-diacyl-sn-glycero-3-phospho-(1D-myo-inositol-3,4,5-trisphosphate) + H2O = a 1,2-diacyl-sn-glycero-3-phospho-(1D-myo-inositol-3,4-bisphosphate) + phosphate. Has phosphatase activity toward PtdIns(4,5)P2 and at a lower extent toward PtdIns(3,4,5)P3 but not toward Ins(1,4,5)P3. Functions in salt stress response by regulating reactive oxygen species (ROS) production, endocytosis, Ca(2+) influx and stress-responsive genes expression. The protein is Type IV inositol polyphosphate 5-phosphatase 9 of Arabidopsis thaliana (Mouse-ear cress).